The primary structure comprises 132 residues: Small ribosomal subunit protein uS8 (132 aa).

The protein belongs to the universal ribosomal protein uS8 family. In terms of assembly, part of the 30S ribosomal subunit. Contacts proteins S5 and S12.

In terms of biological role, one of the primary rRNA binding proteins, it binds directly to 16S rRNA central domain where it helps coordinate assembly of the platform of the 30S subunit. The sequence is that of Small ribosomal subunit protein uS8 from Paramagnetospirillum magneticum (strain ATCC 700264 / AMB-1) (Magnetospirillum magneticum).